We begin with the raw amino-acid sequence, 130 residues long: Small ribosomal subunit protein uS11 (130 aa).

The protein belongs to the universal ribosomal protein uS11 family. In terms of assembly, part of the 30S ribosomal subunit. Interacts with proteins S7 and S18. Binds to IF-3.

In terms of biological role, located on the platform of the 30S subunit, it bridges several disparate RNA helices of the 16S rRNA. Forms part of the Shine-Dalgarno cleft in the 70S ribosome. The polypeptide is Small ribosomal subunit protein uS11 (Thiobacillus denitrificans (strain ATCC 25259 / T1)).